We begin with the raw amino-acid sequence, 157 residues long: uncharacterized protein (157 aa).

The N-acetyltransferase domain occupies 9-154; that stretch reads LLINYKTLDE…ETNSNAITNE (146 aa).

This is an uncharacterized protein from Bacillus mycoides (strain KBAB4) (Bacillus weihenstephanensis).